A 229-amino-acid polypeptide reads, in one-letter code: uncharacterized protein (229 aa).

Helical transmembrane passes span 6–26 (LFFV…FLPT), 36–56 (LVSV…ILLA), 80–99 (SVYD…HRIY), 114–134 (VLSV…HLII), 144–164 (IFEY…ATML), 174–194 (FYYH…IYKF), and 207–224 (YVEA…VLSS).

The protein belongs to the mimivirus L68/R809 family.

The protein resides in the membrane. This is an uncharacterized protein from Acanthamoeba polyphaga (Amoeba).